Consider the following 257-residue polypeptide: Small ribosomal subunit protein uS2 (257 aa).

This sequence belongs to the universal ribosomal protein uS2 family.

The protein is Small ribosomal subunit protein uS2 of Ruegeria pomeroyi (strain ATCC 700808 / DSM 15171 / DSS-3) (Silicibacter pomeroyi).